A 290-amino-acid chain; its full sequence is Fructose-1,6-bisphosphatase class 1 (290 aa).

Mg(2+) is bound by residues Glu78, Asp96, Leu98, and Asp99. Substrate is bound by residues 99 to 102 (DGSS), Tyr201, and Lys226. A Mg(2+)-binding site is contributed by Glu232.

It belongs to the FBPase class 1 family. In terms of assembly, homotetramer. Mg(2+) is required as a cofactor.

The protein resides in the cytoplasm. It carries out the reaction beta-D-fructose 1,6-bisphosphate + H2O = beta-D-fructose 6-phosphate + phosphate. It participates in carbohydrate biosynthesis; gluconeogenesis. The chain is Fructose-1,6-bisphosphatase class 1 from Helicobacter pylori (strain J99 / ATCC 700824) (Campylobacter pylori J99).